Here is a 268-residue protein sequence, read N- to C-terminus: Type III pantothenate kinase 1 (268 aa).

6 to 13 serves as a coordination point for ATP; the sequence is DIGNTNIT. Substrate-binding positions include Tyr-100 and 107-110; that span reads GTDR. Asp-109 acts as the Proton acceptor in catalysis. A K(+)-binding site is contributed by Asp-133. An ATP-binding site is contributed by Thr-136.

This sequence belongs to the type III pantothenate kinase family. In terms of assembly, homodimer. NH4(+) is required as a cofactor. It depends on K(+) as a cofactor.

Its subcellular location is the cytoplasm. The enzyme catalyses (R)-pantothenate + ATP = (R)-4'-phosphopantothenate + ADP + H(+). The protein operates within cofactor biosynthesis; coenzyme A biosynthesis; CoA from (R)-pantothenate: step 1/5. In terms of biological role, catalyzes the phosphorylation of pantothenate (Pan), the first step in CoA biosynthesis. This Symbiobacterium thermophilum (strain DSM 24528 / JCM 14929 / IAM 14863 / T) protein is Type III pantothenate kinase 1.